Consider the following 253-residue polypeptide: Matrix protein (253 aa).

The interval Met1–Asp26 is disordered. Residues Pro55–Pro58 carry the PTAP/PSAP motif motif.

As to quaternary structure, homomultimer. Interacts with viral nucleocapsid. Interacts with host TSG101.

Its subcellular location is the virion membrane. The protein localises to the host endomembrane system. The protein resides in the host nucleus membrane. Its function is as follows. Plays a major role in assembly and budding of virion, by recruiting cellular partners of the ESCRT complexes that play a key role in releasing the budding particle from the host membrane. Condensates the ribonucleocapsid core during virus assembly. In Bos taurus (Bovine), this protein is Matrix protein (M).